The sequence spans 597 residues: Exochitinase 1 (597 aa).

Positions 1–29 form a signal peptide, or 32; sequence MDRFRPLAVLIAAALTLSGTTALSSAARA. One can recognise a Fibronectin type-III domain in the interval 172–253; the sequence is PPTGLRTGSV…ATVTATTAPG (82 aa). A GH18 domain is found at 264–597; sequence HALVGYLHAS…FQRTFDGYFG (334 aa). Residue E384 is the Proton donor of the active site.

Belongs to the glycosyl hydrolase 18 family. Chitinase class II subfamily. Post-translationally, the N-terminus is blocked.

It catalyses the reaction Random endo-hydrolysis of N-acetyl-beta-D-glucosaminide (1-&gt;4)-beta-linkages in chitin and chitodextrins.. Inhibited by the pseudosugar allosamidin A. Its function is as follows. Exochitinase that generates exclusively chitobiose from chitotetraose, chitohexaose, and colloidal high-molecular mass chitin. This Streptomyces olivaceoviridis (Streptomyces corchorusii) protein is Exochitinase 1 (chi01).